The following is a 235-amino-acid chain: NAD(P)H-quinone oxidoreductase subunit K (235 aa).

Residues cysteine 52, cysteine 53, cysteine 117, and cysteine 148 each contribute to the [4Fe-4S] cluster site. The span at 216–226 shows a compositional bias: low complexity; sequence AGAAVAPQLPV. Residues 216 to 235 are disordered; it reads AGAAVAPQLPVTEKEGRDRA.

It belongs to the complex I 20 kDa subunit family. In terms of assembly, NDH-1 can be composed of about 15 different subunits; different subcomplexes with different compositions have been identified which probably have different functions. Requires [4Fe-4S] cluster as cofactor.

It is found in the cellular thylakoid membrane. It carries out the reaction a plastoquinone + NADH + (n+1) H(+)(in) = a plastoquinol + NAD(+) + n H(+)(out). The enzyme catalyses a plastoquinone + NADPH + (n+1) H(+)(in) = a plastoquinol + NADP(+) + n H(+)(out). Functionally, NDH-1 shuttles electrons from an unknown electron donor, via FMN and iron-sulfur (Fe-S) centers, to quinones in the respiratory and/or the photosynthetic chain. The immediate electron acceptor for the enzyme in this species is believed to be plastoquinone. Couples the redox reaction to proton translocation, and thus conserves the redox energy in a proton gradient. Cyanobacterial NDH-1 also plays a role in inorganic carbon-concentration. The sequence is that of NAD(P)H-quinone oxidoreductase subunit K from Synechococcus elongatus (strain ATCC 33912 / PCC 7942 / FACHB-805) (Anacystis nidulans R2).